Reading from the N-terminus, the 170-residue chain is Transmembrane protein 252 (170 aa).

2 consecutive transmembrane segments (helical) span residues 8-28 and 40-60; these read ILCA…AFFI and LIAA…GIFW. The tract at residues 112-147 is disordered; it reads CPAEREASGIPPPLYTETGLEFQDGNDSHPEAPPSY.

The protein localises to the membrane. The polypeptide is Transmembrane protein 252 (TMEM252) (Pongo abelii (Sumatran orangutan)).